The sequence spans 253 residues: MNERDMSLMDHIAELRRRILIIVVFFVIALVVGFFLATPMITYLQGAPTAQDLPMNAFKLTDPLRVYMTFAFTSAFILVFPIILYQLWAFVSPGLHENERKATLAYIPIAFFLFLGGLSFAYFILFPFLIQFIGGLAERLHINELYGINEYFTFLFQITMPFGVLFQLPVVVMFLTRLGIVTPEFLRSVRKYAFFVLLVVAGFITPPELISHLMVTVPLLLLYEFSIWVSHLTYRKVQKLEKLRQEEYRQEEG.

The next 5 membrane-spanning stretches (helical) occupy residues 19-39, 70-90, 109-129, 154-174, and 194-214; these read ILII…LATP, FAFT…LWAF, IAFF…FPFL, FLFQ…VVMF, and FFVL…SHLM.

This sequence belongs to the TatC family. Forms a complex with TatA.

It localises to the cell membrane. Part of the twin-arginine translocation (Tat) system that transports large folded proteins containing a characteristic twin-arginine motif in their signal peptide across membranes. The chain is Sec-independent protein translocase protein TatC from Halalkalibacterium halodurans (strain ATCC BAA-125 / DSM 18197 / FERM 7344 / JCM 9153 / C-125) (Bacillus halodurans).